The following is a 125-amino-acid chain: UPF0102 protein mlr4633 (125 aa).

The protein belongs to the UPF0102 family.

This Mesorhizobium japonicum (strain LMG 29417 / CECT 9101 / MAFF 303099) (Mesorhizobium loti (strain MAFF 303099)) protein is UPF0102 protein mlr4633.